Consider the following 138-residue polypeptide: NADH-quinone oxidoreductase subunit A (138 aa).

The next 3 helical transmembrane spans lie at 8–28, 63–83, and 93–113; these read FGAV…GYLT, FYVV…LFPW, and FALI…AYAW.

It belongs to the complex I subunit 3 family. As to quaternary structure, NDH-1 is composed of 14 different subunits. Subunits NuoA, H, J, K, L, M, N constitute the membrane sector of the complex.

It is found in the cell inner membrane. The catalysed reaction is a quinone + NADH + 5 H(+)(in) = a quinol + NAD(+) + 4 H(+)(out). NDH-1 shuttles electrons from NADH, via FMN and iron-sulfur (Fe-S) centers, to quinones in the respiratory chain. The immediate electron acceptor for the enzyme in this species is believed to be a menaquinone. Couples the redox reaction to proton translocation (for every two electrons transferred, four hydrogen ions are translocated across the cytoplasmic membrane), and thus conserves the redox energy in a proton gradient. The sequence is that of NADH-quinone oxidoreductase subunit A from Prosthecochloris aestuarii (strain DSM 271 / SK 413).